Consider the following 136-residue polypeptide: MSALVYFSSSSENTHRFMQRLGLPATRIPLNERERIRVDEPYILVVPSYGGGGMAGAVPRQVIRFLNDEHNRARIRGVIASGNRNFGDAWGCAGDVIAQKCGVPWLYRFELMGTQRDIDNVRKGVNEFWQQLPRSA.

This sequence belongs to the NrdI family.

Its function is as follows. Probably involved in ribonucleotide reductase function. In Salmonella newport (strain SL254), this protein is Protein NrdI.